The following is a 291-amino-acid chain: Elongation factor Ts (291 aa).

Positions 79–82 (TDFV) are involved in Mg(2+) ion dislocation from EF-Tu.

The protein belongs to the EF-Ts family.

The protein resides in the cytoplasm. Its function is as follows. Associates with the EF-Tu.GDP complex and induces the exchange of GDP to GTP. It remains bound to the aminoacyl-tRNA.EF-Tu.GTP complex up to the GTP hydrolysis stage on the ribosome. The sequence is that of Elongation factor Ts from Roseobacter denitrificans (strain ATCC 33942 / OCh 114) (Erythrobacter sp. (strain OCh 114)).